The chain runs to 502 residues: ATP synthase subunit alpha, chloroplastic (502 aa).

170 to 177 (GDRQTGKS) serves as a coordination point for ATP.

Belongs to the ATPase alpha/beta chains family. F-type ATPases have 2 components, CF(1) - the catalytic core - and CF(0) - the membrane proton channel. CF(1) has five subunits: alpha(3), beta(3), gamma(1), delta(1), epsilon(1). CF(0) has four main subunits: a, b, b' and c.

The protein localises to the plastid. It localises to the chloroplast thylakoid membrane. It catalyses the reaction ATP + H2O + 4 H(+)(in) = ADP + phosphate + 5 H(+)(out). Functionally, produces ATP from ADP in the presence of a proton gradient across the membrane. The alpha chain is a regulatory subunit. In Guillardia theta (Cryptophyte), this protein is ATP synthase subunit alpha, chloroplastic.